We begin with the raw amino-acid sequence, 259 residues long: Protein unc-50 homolog (259 aa).

Met-1 bears the N-acetylmethionine mark. The Cytoplasmic portion of the chain corresponds to 1–82 (MLPSTSLNSS…TKDQWARDDP (82 aa)). At Ser-6 the chain carries Phosphoserine. A helical membrane pass occupies residues 83-103 (AFLVLLSIWLCVSTIGFGFVL). The Lumenal segment spans residues 104 to 115 (DMGFFETIKLLL). Residues 116–136 (WVVFIDCVGVGLLISTLMWFI) form a helical membrane-spanning segment. Topologically, residues 137 to 163 (SNKYLVKRQSRDYDVEWGYAFDVHLNA) are cytoplasmic. Residues 164-184 (FYPLLVILHFIQLFFINHVIL) traverse the membrane as a helical segment. Over 185–187 (TDT) the chain is Lumenal. The helical transmembrane segment at 188–208 (FIGYLVGNTLWLIAVGYYIYV) threads the bilayer. Over 209–222 (TFLGYSALPFLKNT) the chain is Cytoplasmic. Residues 223-243 (VVLLYPFAPLIVLYGLSLALG) traverse the membrane as a helical segment. Topologically, residues 244–259 (WNFTHTLCSFYKYRVK) are lumenal.

It belongs to the unc-50 family. Expressed in brain, kidney and testis, and at lower levels in heart.

Its subcellular location is the nucleus inner membrane. The protein localises to the golgi apparatus membrane. Its function is as follows. Involved in the cell surface expression of neuronal nicotinic receptors. Binds RNA. The polypeptide is Protein unc-50 homolog (Unc50) (Rattus norvegicus (Rat)).